Reading from the N-terminus, the 1070-residue chain is RecBCD enzyme subunit RecC (1070 aa).

Belongs to the RecC family. As to quaternary structure, heterotrimer of RecB, RecC and RecD. All subunits contribute to DNA-binding.

A helicase/nuclease that prepares dsDNA breaks (DSB) for recombinational DNA repair. Binds to DSBs and unwinds DNA via a highly rapid and processive ATP-dependent bidirectional helicase activity. Unwinds dsDNA until it encounters a Chi (crossover hotspot instigator) sequence from the 3' direction. Cuts ssDNA a few nucleotides 3' to the Chi site. The properties and activities of the enzyme are changed at Chi. The Chi-altered holoenzyme produces a long 3'-ssDNA overhang and facilitates RecA-binding to the ssDNA for homologous DNA recombination and repair. Holoenzyme degrades any linearized DNA that is unable to undergo homologous recombination. In the holoenzyme this subunit recognizes the wild-type Chi sequence, and when added to isolated RecB increases its ATP-dependent helicase processivity. The sequence is that of RecBCD enzyme subunit RecC from Buchnera aphidicola subsp. Acyrthosiphon pisum (strain APS) (Acyrthosiphon pisum symbiotic bacterium).